A 334-amino-acid polypeptide reads, in one-letter code: Beta-1,3-N-acetylglucosaminyltransferase radical fringe (334 aa).

The Cytoplasmic portion of the chain corresponds to 1 to 6 (MSRVRR). The helical; Signal-anchor for type II membrane protein transmembrane segment at 7 to 29 (VLCRACLALAAVLAVLLLLPLPL) threads the bilayer. The Lumenal portion of the chain corresponds to 30–334 (PLPLPLPRAP…MKNRGKEAFQ (305 aa)). Arginine 77 contributes to the substrate binding site. Residue asparagine 116 is glycosylated (N-linked (GlcNAc...) asparagine). Intrachain disulfides connect cysteine 117–cysteine 128 and cysteine 146–cysteine 210. Aspartate 150 contributes to the substrate binding site. Position 151 (aspartate 151) interacts with Mn(2+). Aspartate 240 is an active-site residue. Histidine 264 contacts Mn(2+). The cysteines at positions 314 and 323 are disulfide-linked.

It belongs to the glycosyltransferase 31 family. Requires Mn(2+) as cofactor. Most abundantly expressed in adult brain. Expressed in most neurons of the brain but not in glial cells. Also detected to a lower extent in adult lung and kidney.

It is found in the golgi apparatus membrane. It carries out the reaction 3-O-(alpha-L-fucosyl)-L-threonyl-[EGF-like domain protein] + UDP-N-acetyl-alpha-D-glucosamine = 3-O-(N-acetyl-beta-D-glucosaminyl-(1-&gt;3)-alpha-L-fucosyl)-L-threonyl-[EGF-like domain protein] + UDP + H(+). The catalysed reaction is 3-O-(alpha-L-fucosyl)-L-seryl-[EGF-like domain protein] + UDP-N-acetyl-alpha-D-glucosamine = 3-O-(N-acetyl-beta-D-glucosaminyl-(1-&gt;3)-alpha-L-fucosyl)-L-seryl-[EGF-like domain protein] + UDP + H(+). Its function is as follows. Glycosyltransferase that initiates the elongation of O-linked fucose residues attached to EGF-like repeats in the extracellular domain of Notch molecules. Modulates NOTCH1 activity by modifying O-fucose residues at specific EGF-like domains resulting in enhancement of NOTCH1 activation by DLL1 and JAG1. Inhibits Notch signaling in postmitotic neurons of the brain. It may play a role in adult brain and in neurogenesis. It may play a role in limb development. The chain is Beta-1,3-N-acetylglucosaminyltransferase radical fringe from Rattus norvegicus (Rat).